The following is a 152-amino-acid chain: Ninjurin-1 (152 aa).

Met1 is modified (N-acetylmethionine). Positions Met1–Leu10 are enriched in acidic residues. A disordered region spans residues Met1–Trp29. Over Met1–Val78 the chain is Extracellular. 2 positions are modified to phosphoserine: Ser18 and Ser21. The interval Pro26 to Asn37 is N-terminal adhesion motif. A required to induce plasma membrane rupture region spans residues His40–Glu69. A helix alpha1 region spans residues Lys44 to Ala55. Residues Met58–Phe74 are helix alpha2. N-linked (GlcNAc...) asparagine glycosylation is present at Asn60. A helical transmembrane segment spans residues Pro79–Lys103. At Tyr104–Ala113 the chain is on the cytoplasmic side. Residues Lys114–Ala138 form a helical membrane-spanning segment. The Extracellular portion of the chain corresponds to Phe139–Gln152.

Belongs to the ninjurin family. Homodimer; in absence of death stimuli, forms an inactive homodimer. Homooligomer; in response to death stimuli, homooligomerizes into long, highly branched filaments and large, ring-shaped structures in the membrane. Cleaved by MMP9 protease to generate the Secreted ninjurin-1 form. Post-translationally, N-linked glycosylation is required for homooligomerization.

The protein localises to the cell membrane. It is found in the synaptic cell membrane. The protein resides in the secreted. In response to death stimuli, homooligomerizes and disrupts membrane integrity by introducing the hydrophilic faces of alpha1 and alpha2 helices into the hydrophobic membrane. Homooligomerization and ability to mediate plasma membrane rupture is inhibited by glycine; it is unclear whether glycine directly or indirectly inhibits homooligomerization. In normal conditions, NINJ1 is autoinhibited via formation of a homodimer: in the inactive homodimer, the alpha1 and alpha2 helices (residues 44-74) form a single transmembrane region without a kink, in which hydrophilic faces of alpha1 and alpha2 helices are sequestered. Effector of various programmed cell death, such as pyroptosis and necroptosis, which mediates plasma membrane rupture (cytolysis). Oligomerizes in response to death stimuli and forms ring-like structures on the plasma membrane: acts by cutting and shedding membrane disks, like a cookie cutter, leading to membrane damage and loss that cannot be repaired by the cell. Plasma membrane rupture leads to release intracellular molecules named damage-associated molecular patterns (DAMPs) that propagate the inflammatory response. Mechanistically, mediates plasma membrane rupture by introducing hydrophilic faces of 2 alpha helices into the hydrophobic membrane. Induces plasma membrane rupture downstream of Gasdermin (GSDMA, GSDMB, GSDMC, GSDMD, or GSDME) or MLKL during pyroptosis or necroptosis, respectively. Acts as an effector of PANoptosis downstream of CASP1, CASP4, CASP8 and RIPK3. Also induces plasma membrane rupture in response to cell swelling caused by osmotic stress and ferroptosis downstream of lipid peroxidation. Acts as a regulator of Toll-like receptor 4 (TLR4) signaling triggered by lipopolysaccharide (LPS) during systemic inflammation; directly binds LPS. Involved in leukocyte migration during inflammation by promoting transendothelial migration of macrophages via homotypic binding. Promotes the migration of monocytes across the brain endothelium to central nervous system inflammatory lesions. Also acts as a homophilic transmembrane adhesion molecule involved in various processes such as axonal growth, cell chemotaxis and angiogenesis. Promotes cell adhesion by mediating homophilic interactions via its extracellular N-terminal adhesion motif (N-NAM). Involved in the progression of the inflammatory stress by promoting cell-to-cell interactions between immune cells and endothelial cells. Plays a role in nerve regeneration by promoting maturation of Schwann cells. Acts as a regulator of angiogenesis. Promotes the formation of new vessels by mediating the interaction between capillary pericyte cells and endothelial cells. Also mediates vascular functions in penile tissue as well as vascular formation. Promotes osteoclasts development by enhancing the survival of prefusion osteoclasts. Also involved in striated muscle growth and differentiation. Also involved in cell senescence in a p53/TP53 manner, possibly by acting as an indirect regulator of p53/TP53 mRNA translation. Its function is as follows. Secreted form generated by cleavage, which has chemotactic activity. Acts as an anti-inflammatory mediator by promoting monocyte recruitment, thereby ameliorating atherosclerosis. The polypeptide is Ninjurin-1 (Mus musculus (Mouse)).